The following is a 430-amino-acid chain: Asparagine--tRNA ligase (430 aa).

The protein belongs to the class-II aminoacyl-tRNA synthetase family. As to quaternary structure, homodimer.

It is found in the cytoplasm. The enzyme catalyses tRNA(Asn) + L-asparagine + ATP = L-asparaginyl-tRNA(Asn) + AMP + diphosphate + H(+). The protein is Asparagine--tRNA ligase of Shouchella clausii (strain KSM-K16) (Alkalihalobacillus clausii).